The following is a 706-amino-acid chain: Polyribonucleotide nucleotidyltransferase (706 aa).

Asp486 and Asp492 together coordinate Mg(2+). One can recognise a KH domain in the interval 553–612 (PRIHTIKISTDKIKDVIGKGGSVIRALTEETGTTIEIEDDGTVRIASTDGEKAKHAIRRI). Residues 622-690 (GRVYQGKVTR…RQGRVRLSIK (69 aa)) enclose the S1 motif domain.

The protein belongs to the polyribonucleotide nucleotidyltransferase family. In terms of assembly, component of the RNA degradosome, which is a multiprotein complex involved in RNA processing and mRNA degradation. Requires Mg(2+) as cofactor.

The protein localises to the cytoplasm. It catalyses the reaction RNA(n+1) + phosphate = RNA(n) + a ribonucleoside 5'-diphosphate. Its function is as follows. Involved in mRNA degradation. Catalyzes the phosphorolysis of single-stranded polyribonucleotides processively in the 3'- to 5'-direction. The polypeptide is Polyribonucleotide nucleotidyltransferase (Pectobacterium atrosepticum (strain SCRI 1043 / ATCC BAA-672) (Erwinia carotovora subsp. atroseptica)).